A 152-amino-acid polypeptide reads, in one-letter code: MAQNKNLNLELSLSQYVEDDPWVLKKKLSDSDLYYSAQLYLPKQEMEHFVLPEMDHDLVRKLGAGVEVKVRDVDSVDDFYTVRLKVRNGQYYLGKGWGLIKNAKVLNTGDHIGLFWDKLTREVKFKHFKSQSITMHREAGTTSTQKNVLQKK.

A DNA-binding region (TF-B3) is located at residues 24–131; that stretch reads LKKKLSDSDL…EVKFKHFKSQ (108 aa).

The protein localises to the nucleus. The chain is B3 domain-containing protein At1g10455 from Arabidopsis thaliana (Mouse-ear cress).